Reading from the N-terminus, the 295-residue chain is 4-hydroxy-tetrahydrodipicolinate synthase (295 aa).

Thr48 contacts pyruvate. Tyr135 serves as the catalytic Proton donor/acceptor. Lys163 functions as the Schiff-base intermediate with substrate in the catalytic mechanism. A pyruvate-binding site is contributed by Val204.

This sequence belongs to the DapA family. In terms of assembly, homotetramer; dimer of dimers.

It is found in the cytoplasm. The enzyme catalyses L-aspartate 4-semialdehyde + pyruvate = (2S,4S)-4-hydroxy-2,3,4,5-tetrahydrodipicolinate + H2O + H(+). It functions in the pathway amino-acid biosynthesis; L-lysine biosynthesis via DAP pathway; (S)-tetrahydrodipicolinate from L-aspartate: step 3/4. In terms of biological role, catalyzes the condensation of (S)-aspartate-beta-semialdehyde [(S)-ASA] and pyruvate to 4-hydroxy-tetrahydrodipicolinate (HTPA). This Francisella philomiragia subsp. philomiragia (strain ATCC 25017 / CCUG 19701 / FSC 153 / O#319-036) protein is 4-hydroxy-tetrahydrodipicolinate synthase.